We begin with the raw amino-acid sequence, 318 residues long: Pantothenate kinase (318 aa).

96–103 (GSVAVGKS) contacts ATP.

The protein belongs to the prokaryotic pantothenate kinase family.

The protein localises to the cytoplasm. The enzyme catalyses (R)-pantothenate + ATP = (R)-4'-phosphopantothenate + ADP + H(+). Its pathway is cofactor biosynthesis; coenzyme A biosynthesis; CoA from (R)-pantothenate: step 1/5. The polypeptide is Pantothenate kinase (Coxiella burnetii (strain RSA 493 / Nine Mile phase I)).